We begin with the raw amino-acid sequence, 31 residues long: Sarcolipin (31 aa).

Over methionine 1 to glutamate 7 the chain is Cytoplasmic. The helical transmembrane segment at leucine 8–valine 26 threads the bilayer. Residues arginine 27–tyrosine 31 are Lumenal-facing.

It belongs to the sarcolipin family. Homooligomer. Can also form heterooligomers with other sarcoplasmic/endoplasmic reticulum calcium ATPase (SERCA) regulators ARLN, ERLN, PLN and STRIT1/DWORF. Monomer. Interacts with calcium ATPase ATP2A1/SERCA1. Interacts as a monomer with ATP2A2/SERCA2; the interaction decreases ATP2A2 Ca(2+) affinity. Interacts with VMP1; VMP1 competes with PLN and SLN to prevent them from forming an inhibitory complex with ATP2A2.

The protein resides in the sarcoplasmic reticulum membrane. It localises to the endoplasmic reticulum membrane. Reversibly inhibits the activity of ATP2A1/SERCA1 and ATP2A2/SERCA2 in sarcoplasmic reticulum by decreasing the apparent affinity of the ATPase for Ca(2+). Also inhibits the activity of ATP2A3/SERCA3. Modulates calcium re-uptake during muscle relaxation and plays an important role in calcium homeostasis in muscle. Required for muscle-based, non-shivering thermogenesis. The protein is Sarcolipin (Sln) of Rattus norvegicus (Rat).